The sequence spans 282 residues: MLPLLRCVPRVLGSAVPSLRAAAPASPFRQLLTPGPRLCARPFGLLSVRAGSERRPGLLRPRGPCACGCGCGLLHTEGDKAFVDFLNDEIKEERKIQKHKTLPKMSGGWELELNGTEAKLMRKVAGEKITVTFNINNSIPPTFDGEEEPTQGQKVEEQEPELTSTPNFVVEVIKNDDGKKALVLDCHYPEDEVGQEDEAESDIFSIREVSFQSSGESEWKDTNYTLNTDSLDWALYDHLMDFLADRGVDNTFADELVELSTALEHQEYISFLEDLKSFVKSQ.

The transit peptide at 1 to 70 (MLPLLRCVPR…PRGPCACGCG (70 aa)) directs the protein to the mitochondrion. The tract at residues 76–93 (TEGDKAFVDFLNDEIKEE) is C1q binding. The residue at position 91 (Lys-91) is an N6-acetyllysine. The tract at residues 137 to 163 (NSIPPTFDGEEEPTQGQKVEEQEPELT) is disordered. Residues 168 to 213 (FVVEVIKNDDGKKALVLDCHYPEDEVGQEDEAESDIFSIREVSFQS) form an interaction with MAVS region. At Tyr-188 the chain carries Phosphotyrosine. Phosphoserine is present on residues Ser-201 and Ser-205.

Belongs to the MAM33 family. Homotrimer; three monomers form a donut-shaped structure with an unusually asymmetric charge distribution on the surface. Interacts with CDK13, HRK, VTN, NFYB, ADRA1B, FOXC1, DDX21, DDX50, NCL, SRSF1 and SRSF9. Interacts with CD93; the association may represent a cell surface C1q receptor. Interacts with KRT1; the association represents a cell surface kininogen receptor. Interacts with CD209; the interaction is indicative for a C1q:C1QBP:CD209 signaling complex. Interacts with FBL and RRP1; the respective interactions with C1QBP are competitive. Probably associates with the mitoribosome. Interacts with MAVS; the interaction occurs upon viral transfection. Interacts with PPIF. Interacts with U2AF1L4. Interacts with PLEKHN1. Interacts with VGF-derived peptide TLQP-21. Interacts with MRE11 and RAD50; forming the MRC (MRE11-RAD50-C1QBP) complex that inhibits the activity of MRE11. As to quaternary structure, (Microbial infection) Interacts with Rubella virus capsid protein; the interaction occurs in mitochondria. In terms of assembly, (Microbial infection) Interacts with L.monocytogenes InlB.

The protein resides in the mitochondrion matrix. Its subcellular location is the nucleus. It is found in the cell membrane. It localises to the secreted. The protein localises to the cytoplasm. The protein resides in the nucleolus. Multifunctional and multicompartmental protein involved in inflammation and infection processes, ribosome biogenesis, protein synthesis in mitochondria, regulation of apoptosis, transcriptional regulation and pre-mRNA splicing. At the cell surface is thought to act as an endothelial receptor for plasma proteins of the complement and kallikrein-kinin cascades. Putative receptor for C1q; specifically binds to the globular 'heads' of C1q thus inhibiting C1; may perform the receptor function through a complex with C1qR/CD93. In complex with cytokeratin-1/KRT1 is a high affinity receptor for kininogen-1/HMWK. Can also bind other plasma proteins, such as coagulation factor XII leading to its autoactivation. May function to bind initially fluid kininogen-1 to the cell membrane. The secreted form may enhance both extrinsic and intrinsic coagulation pathways. It is postulated that the cell surface form requires docking with transmembrane proteins for downstream signaling which might be specific for a cell-type or response. By acting as C1q receptor is involved in chemotaxis of immature dendritic cells and neutrophils and is proposed to signal through CD209/DC-SIGN on immature dendritic cells, through integrin alpha-4/beta-1 during trophoblast invasion of the decidua, and through integrin beta-1 during endothelial cell adhesion and spreading. Signaling involved in inhibition of innate immune response is implicating the PI3K-AKT/PKB pathway. Required for protein synthesis in mitochondria. In mitochondrial translation may be involved in formation of functional 55S mitoribosomes; the function seems to involve its RNA-binding activity. Acts as a RNA modification reader, which specifically recognizes and binds mitochondrial RNAs modified by C5-methylcytosine (m5C) in response to stress, and promotes recruitment of the mitochondrial degradosome complex, leading to their degradation. May be involved in the nucleolar ribosome maturation process; the function may involve the exchange of FBL for RRP1 in the association with pre-ribosome particles. Involved in regulation of RNA splicing by inhibiting the RNA-binding capacity of SRSF1 and its phosphorylation. Is required for the nuclear translocation of splicing factor U2AF1L4. Involved in regulation of CDKN2A- and HRK-mediated apoptosis. Stabilizes mitochondrial CDKN2A isoform smARF. May be involved in regulation of FOXC1 transcriptional activity and NFY/CCAAT-binding factor complex-mediated transcription. May play a role in antibacterial defense as it can bind to cell surface hyaluronan and inhibit Streptococcus pneumoniae hyaluronate lyase. May be involved in modulation of the immune response; ligation by HCV core protein is resulting in suppression of interleukin-12 production in monocyte-derived dendritic cells. Involved in regulation of antiviral response by inhibiting RIGI- and IFIH1-mediated signaling pathways probably involving its association with MAVS after viral infection. Acts as a regulator of DNA repair via homologous recombination by inhibiting the activity of MRE11: interacts with unphosphorylated MRE11 and RAD50 in absence of DNA damage, preventing formation and activity of the MRN complex. Following DNA damage, dissociates from phosphorylated MRE11, allowing formation of the MRN complex. Its function is as follows. (Microbial infection) During bacterial infection processes acts as an attachment site for microbial proteins, including Listeria monocytogenes internalin B (InlB). The chain is Complement component 1 Q subcomponent-binding protein, mitochondrial (C1QBP) from Chlorocebus aethiops (Green monkey).